Reading from the N-terminus, the 1096-residue chain is Pentatricopeptide repeat-containing protein At5g55840 (1096 aa).

PPR repeat units follow at residues 122–156 (NPSV…GFNP), 157–191 (SVYT…KICP), 192–226 (DVAT…GYAP), 227–261 (TIVT…GVDA), 262–296 (DVCT…MIHP), 297–331 (NEVT…GLSP), 332–366 (NHVT…GLTP), 367–401 (SEVS…GVCV), 402–436 (GRIT…GIDP), 437–471 (DIVT…GLSP), 472–506 (NGII…GHTR), 507–541 (DHFT…GILP), 542–576 (NTVS…GHHP), 577–607 (TFFT…LHAV), 612–646 (DTVM…SILP), 647–681 (DSYT…GNVL), 683–717 (NKVM…GHTP), 718–752 (DIVT…NGGP), 753–787 (NLTT…GILP), 788–822 (DKLT…GVEV), 823–857 (DRYT…GISL), 858–892 (DKDT…GISP), 893–927 (ESRK…KICP), 928–962 (PNVA…KLVP), 963–997 (TIAS…GLKL), 998–1032 (DLVS…GFLA), and 1033–1068 (NATT…GFIT).

The protein belongs to the PPR family. P subfamily.

The sequence is that of Pentatricopeptide repeat-containing protein At5g55840 from Arabidopsis thaliana (Mouse-ear cress).